The primary structure comprises 297 residues: Mitochondrial substrate carrier family protein P (297 aa).

3 Solcar repeats span residues 12–98 (KPSW…IKNH), 104–189 (SSSF…LKRI), and 201–293 (ISGT…LSNF). The next 6 membrane-spanning stretches (helical) occupy residues 15–35 (WVSF…VAPL), 66–86 (GIKG…PYAA), 107–127 (FQIF…TYPL), 165–185 (IQPT…TFEF), 207–227 (LIAG…FDVV), and 262–282 (ILAL…TASI).

Belongs to the mitochondrial carrier (TC 2.A.29) family.

The protein resides in the mitochondrion inner membrane. In terms of biological role, mitochondrial solute carriers shuttle metabolites, nucleotides, and cofactors through the mitochondrial inner membrane. Required for the accumulation of coenzyme A in the mitochondrial matrix. This is Mitochondrial substrate carrier family protein P (mcfP) from Dictyostelium discoideum (Social amoeba).